The sequence spans 368 residues: MAPVSWGQALRNYKPTGQQLFFSLTALLAAAVWGRDRQLDIGLFSPQSQLLALGLGFSLAAIAGYWVVPLLRRIKAGQFIREDGPQSHLQKAGTPTMGGIFAIPAGLLPALILAGRSPLVWALAFVTLAYATIGWLDDWQILRHRNNKGISPKLKLCLQFGAAFLFCLWLISQQGWQGTITTITLPFGWSLALSLLFWPLAVFTLVSESNATNLTDGLDGLAGGTGAAVLAGLGLWLAPQDPAIATFCCSLAGGFLGFLLHNRNPARVFMGDTGSLALGGAIAAIAIVANCLWVLLVMGGLFVLESISVILQVSYYKATKGPDGKGKRLLRMAPWHHHLELGGWSETQVVASFYGLTLLLIASCWLLN.

9 helical membrane-spanning segments follow: residues L50 to L70, P95 to G115, S117 to D137, L156 to W176, I183 to F203, L218 to A238, P242 to N262, A284 to L304, and T347 to L367.

It belongs to the glycosyltransferase 4 family. MraY subfamily. The cofactor is Mg(2+).

The protein resides in the cell inner membrane. It carries out the reaction UDP-N-acetyl-alpha-D-muramoyl-L-alanyl-gamma-D-glutamyl-meso-2,6-diaminopimeloyl-D-alanyl-D-alanine + di-trans,octa-cis-undecaprenyl phosphate = di-trans,octa-cis-undecaprenyl diphospho-N-acetyl-alpha-D-muramoyl-L-alanyl-D-glutamyl-meso-2,6-diaminopimeloyl-D-alanyl-D-alanine + UMP. Its pathway is cell wall biogenesis; peptidoglycan biosynthesis. In terms of biological role, catalyzes the initial step of the lipid cycle reactions in the biosynthesis of the cell wall peptidoglycan: transfers peptidoglycan precursor phospho-MurNAc-pentapeptide from UDP-MurNAc-pentapeptide onto the lipid carrier undecaprenyl phosphate, yielding undecaprenyl-pyrophosphoryl-MurNAc-pentapeptide, known as lipid I. This Synechococcus sp. (strain ATCC 27144 / PCC 6301 / SAUG 1402/1) (Anacystis nidulans) protein is Phospho-N-acetylmuramoyl-pentapeptide-transferase.